A 423-amino-acid chain; its full sequence is UDP-N-acetylglucosamine 1-carboxyvinyltransferase 2 (423 aa).

Residue 23–24 (KN) participates in phosphoenolpyruvate binding. Position 95 (arginine 95) interacts with UDP-N-acetyl-alpha-D-glucosamine. Cysteine 119 (proton donor) is an active-site residue. At cysteine 119 the chain carries 2-(S-cysteinyl)pyruvic acid O-phosphothioketal. UDP-N-acetyl-alpha-D-glucosamine is bound by residues aspartate 306 and isoleucine 328.

Belongs to the EPSP synthase family. MurA subfamily.

It is found in the cytoplasm. It carries out the reaction phosphoenolpyruvate + UDP-N-acetyl-alpha-D-glucosamine = UDP-N-acetyl-3-O-(1-carboxyvinyl)-alpha-D-glucosamine + phosphate. It functions in the pathway cell wall biogenesis; peptidoglycan biosynthesis. Cell wall formation. Adds enolpyruvyl to UDP-N-acetylglucosamine. The sequence is that of UDP-N-acetylglucosamine 1-carboxyvinyltransferase 2 from Symbiobacterium thermophilum (strain DSM 24528 / JCM 14929 / IAM 14863 / T).